A 357-amino-acid polypeptide reads, in one-letter code: Acidic fibroblast growth factor intracellular-binding protein (357 aa).

Residue T2 is modified to N-acetylthreonine.

Binds to internalized FGF1; this interaction is increased in the presence of CSNKB, suggesting a possible cooperative interaction between CSNKB and FIBP in binding to FGF1.

The protein resides in the nucleus. Its subcellular location is the endomembrane system. May be involved in mitogenic function of FGF1. May mediate with IER2 FGF-signaling in the establishment of laterality in the embryo. This chain is Acidic fibroblast growth factor intracellular-binding protein (FIBP), found in Chlorocebus aethiops (Green monkey).